The primary structure comprises 240 residues: Endo-chitosanase B (240 aa).

The signal sequence occupies residues 1 to 17; that stretch reads MRLSEILAVALVTGATA. Residue N86 is glycosylated (N-linked (GlcNAc...) asparagine).

This sequence belongs to the glycosyl hydrolase 75 family.

It localises to the secreted. It carries out the reaction Endohydrolysis of beta-(1-&gt;4)-linkages between D-glucosamine residues in a partly acetylated chitosan.. Its function is as follows. Chitosanase catalyzing the endo-type cleavage of chitosan, the deacylated form of chitin. Chitosanase may be crucial in the degradation of the deacetylated portion of chitin in the fungal cell wall. Chitoolisaccharides produced by the hydrolysis of partially N-acetylated chitosan are known to have many biological activities, including antibacterial activity, immune-enhancing effects, and elicitor activity. The chain is Endo-chitosanase B (csnB) from Aspergillus oryzae (Yellow koji mold).